Consider the following 116-residue polypeptide: Large ribosomal subunit protein bL20c (116 aa).

The protein belongs to the bacterial ribosomal protein bL20 family.

It localises to the plastid. The protein resides in the chloroplast. In terms of biological role, binds directly to 23S ribosomal RNA and is necessary for the in vitro assembly process of the 50S ribosomal subunit. It is not involved in the protein synthesizing functions of that subunit. The polypeptide is Large ribosomal subunit protein bL20c (Oltmannsiellopsis viridis (Marine flagellate)).